The chain runs to 66 residues: Kappa-flavitoxin (66 aa).

5 disulfides stabilise this stretch: C3–C21, C14–C42, C27–C31, C46–C58, and C59–C64.

It belongs to the three-finger toxin family. Long-chain subfamily. Kappa-neurotoxin sub-subfamily. In terms of assembly, homo- and heterodimer; non-covalently linked. Expressed by the venom gland.

It localises to the secreted. Postsynaptic neurotoxin that binds and inhibits neuronal nicotinic acetylcholine receptors (nAChR) with high affinity (IC(50)&lt;100 nM). Is a selective, and slowly reversible antagonist of alpha-3/CHRNA3-containing and some alpha-4/CHRNA4-containing AChRs. This Bungarus flaviceps flaviceps (Red-headed krait) protein is Kappa-flavitoxin.